The following is a 269-amino-acid chain: MERSQSRLSLSASFEALAIYFPCMNSFDDEDAGDSRRLKGAIQRSTETGLAVEMPSRTLRQASHESIEDSMNSYGSEGNLNYGGVCLASDAQFSDFLGSMGPAQFVGRQTLATTPMGDVEIGLQERNGQLEVDIIQARGLTAKPGSKTLPAAYIKAYLLENGICIAKKKTKVARKSLDPLYNQVLLFPESPQGKVLQVIVWGNYGRMERKQFMGVARVLLEELDLTTLAVGWYKLFPTSSMVDPATGPLLRQASQLSLESTVGPCGERS.

The 119-residue stretch at 115–233 (PMGDVEIGLQ…DLTTLAVGWY (119 aa)) folds into the C2 domain. A phosphoserine mark is found at Ser254 and Ser257.

Binds PPFIA3. Does not bind RAB3.

The protein localises to the synapse. Its function is as follows. Regulates synaptic membrane exocytosis. This is Regulating synaptic membrane exocytosis protein 4 (RIMS4) from Homo sapiens (Human).